A 730-amino-acid chain; its full sequence is Catalase-peroxidase (730 aa).

The tract at residues 1-21 is disordered; sequence MTENKCPVTGKMSKATAGSGT. Residues 95–218 constitute a cross-link (tryptophyl-tyrosyl-methioninium (Trp-Tyr) (with M-244)); the sequence is WHSAGTYRVG…LAAVQMGLIY (124 aa). Catalysis depends on histidine 96, which acts as the Proton acceptor. The tryptophyl-tyrosyl-methioninium (Tyr-Met) (with W-95) cross-link spans 218–244; the sequence is YVNPEGPNGNPDPLGSAHDVRETFARM. Histidine 259 contributes to the heme b binding site.

The protein belongs to the peroxidase family. Peroxidase/catalase subfamily. Homodimer or homotetramer. Heme b serves as cofactor. Post-translationally, formation of the three residue Trp-Tyr-Met cross-link is important for the catalase, but not the peroxidase activity of the enzyme.

It carries out the reaction H2O2 + AH2 = A + 2 H2O. The catalysed reaction is 2 H2O2 = O2 + 2 H2O. Bifunctional enzyme with both catalase and broad-spectrum peroxidase activity. The chain is Catalase-peroxidase from Clostridium botulinum (strain Alaska E43 / Type E3).